The following is a 232-amino-acid chain: Orotidine 5'-phosphate decarboxylase (232 aa).

Substrate is bound by residues aspartate 16, lysine 38, 65–74, threonine 119, arginine 180, glutamine 189, glycine 209, and arginine 210; that span reads DLKLHDIGNT. Lysine 67 (proton donor) is an active-site residue.

The protein belongs to the OMP decarboxylase family. Type 1 subfamily. Homodimer.

The catalysed reaction is orotidine 5'-phosphate + H(+) = UMP + CO2. The protein operates within pyrimidine metabolism; UMP biosynthesis via de novo pathway; UMP from orotate: step 2/2. Functionally, catalyzes the decarboxylation of orotidine 5'-monophosphate (OMP) to uridine 5'-monophosphate (UMP). In Methylorubrum populi (strain ATCC BAA-705 / NCIMB 13946 / BJ001) (Methylobacterium populi), this protein is Orotidine 5'-phosphate decarboxylase.